A 329-amino-acid chain; its full sequence is Malate dehydrogenase (329 aa).

An NAD(+)-binding site is contributed by 13 to 19 (GAAGNIS). Residues R94 and R100 each coordinate substrate. NAD(+)-binding positions include N107, Q114, and 131–133 (VGN). N133 and R164 together coordinate substrate. H189 functions as the Proton acceptor in the catalytic mechanism.

This sequence belongs to the LDH/MDH superfamily. MDH type 2 family.

It catalyses the reaction (S)-malate + NAD(+) = oxaloacetate + NADH + H(+). Its function is as follows. Catalyzes the reversible oxidation of malate to oxaloacetate. The sequence is that of Malate dehydrogenase from Psychrobacter arcticus (strain DSM 17307 / VKM B-2377 / 273-4).